The sequence spans 594 residues: UvrABC system protein C (594 aa).

The region spanning 14–91 (DQPGCYLMKD…IKKYDPKYNI (78 aa)) is the GIY-YIG domain. The UVR domain occupies 196–231 (KEVRSELEIKMYEASEKLEFERAKELRDQIAHIDAI).

The protein belongs to the UvrC family. As to quaternary structure, interacts with UvrB in an incision complex.

It localises to the cytoplasm. Functionally, the UvrABC repair system catalyzes the recognition and processing of DNA lesions. UvrC both incises the 5' and 3' sides of the lesion. The N-terminal half is responsible for the 3' incision and the C-terminal half is responsible for the 5' incision. The sequence is that of UvrABC system protein C from Bacillus cereus (strain G9842).